Consider the following 583-residue polypeptide: Putative fatty-acid--CoA ligase fadD25 (583 aa).

The next 3 helical transmembrane spans lie at 77–97, 109–129, and 229–249; these read YVVS…LSIP, VFAD…DNVV, and FVLG…TSPI. The tract at residues 353 to 375 is disordered; sequence IVQFDPQKLPDGQAERTESDGGT.

Belongs to the ATP-dependent AMP-binding enzyme family.

It localises to the cell membrane. The chain is Putative fatty-acid--CoA ligase fadD25 (fadD25) from Mycobacterium tuberculosis (strain CDC 1551 / Oshkosh).